The sequence spans 325 residues: Beta-ketoacyl-[acyl-carrier-protein] synthase III (325 aa).

Residues C112 and H250 contribute to the active site. Residues Q251–R255 are ACP-binding. N280 is a catalytic residue.

The protein belongs to the thiolase-like superfamily. FabH family. As to quaternary structure, homodimer.

It is found in the cytoplasm. The catalysed reaction is malonyl-[ACP] + acetyl-CoA + H(+) = 3-oxobutanoyl-[ACP] + CO2 + CoA. It functions in the pathway lipid metabolism; fatty acid biosynthesis. In terms of biological role, catalyzes the condensation reaction of fatty acid synthesis by the addition to an acyl acceptor of two carbons from malonyl-ACP. Catalyzes the first condensation reaction which initiates fatty acid synthesis and may therefore play a role in governing the total rate of fatty acid production. Possesses both acetoacetyl-ACP synthase and acetyl transacylase activities. Its substrate specificity determines the biosynthesis of branched-chain and/or straight-chain of fatty acids. The polypeptide is Beta-ketoacyl-[acyl-carrier-protein] synthase III (Lactococcus lactis subsp. cremoris (strain MG1363)).